The following is a 186-amino-acid chain: Elongation factor P (186 aa).

Belongs to the elongation factor P family.

The protein resides in the cytoplasm. Its pathway is protein biosynthesis; polypeptide chain elongation. Functionally, involved in peptide bond synthesis. Stimulates efficient translation and peptide-bond synthesis on native or reconstituted 70S ribosomes in vitro. Probably functions indirectly by altering the affinity of the ribosome for aminoacyl-tRNA, thus increasing their reactivity as acceptors for peptidyl transferase. This Neisseria gonorrhoeae (strain ATCC 700825 / FA 1090) protein is Elongation factor P.